Reading from the N-terminus, the 286-residue chain is uncharacterized protein (286 aa).

A run of 6 helical transmembrane segments spans residues isoleucine 52 to leucine 74, leucine 79 to leucine 101, tryptophan 142 to phenylalanine 161, valine 168 to leucine 190, isoleucine 203 to valine 225, and isoleucine 257 to methionine 276.

Its subcellular location is the cell membrane. This is an uncharacterized protein from Archaeoglobus fulgidus (strain ATCC 49558 / DSM 4304 / JCM 9628 / NBRC 100126 / VC-16).